Consider the following 442-residue polypeptide: Exodeoxyribonuclease 7 large subunit (442 aa).

It belongs to the XseA family. As to quaternary structure, heterooligomer composed of large and small subunits.

The protein resides in the cytoplasm. The catalysed reaction is Exonucleolytic cleavage in either 5'- to 3'- or 3'- to 5'-direction to yield nucleoside 5'-phosphates.. Its function is as follows. Bidirectionally degrades single-stranded DNA into large acid-insoluble oligonucleotides, which are then degraded further into small acid-soluble oligonucleotides. The sequence is that of Exodeoxyribonuclease 7 large subunit from Shewanella sediminis (strain HAW-EB3).